The sequence spans 295 residues: ER-localized J domain-containing protein 5 (295 aa).

The N-terminal stretch at Met1–Ala20 is a signal peptide. Residues Phe21–Lys130 lie on the Lumenal side of the membrane. Residues Asp42–Asn110 form the J domain. The chain crosses the membrane as a helical span at residues Thr131–Ile151. The Cytoplasmic segment spans residues Ile152–Lys295. Positions Lys259 to Asn287 are disordered. The span at Lys267–Gln280 shows a compositional bias: basic residues.

The protein belongs to the DnaJ family.

The protein resides in the endoplasmic reticulum membrane. In terms of biological role, dnaJ-like chaperone required for the folding capacity of the endoplasmic reticulum. This is ER-localized J domain-containing protein 5 (ERJ5) from Saccharomyces cerevisiae (strain ATCC 204508 / S288c) (Baker's yeast).